The following is a 411-amino-acid chain: BRO1 domain-containing protein BROX (411 aa).

The region spanning 90-408 (FKWTDTLQGH…DIRPQKDTGC (319 aa)) is the BRO1 domain. Positions 375-404 (LTKRPKDDSVKPKPEEDVKPVKEPDIRPQK) are enriched in basic and acidic residues. Residues 375-411 (LTKRPKDDSVKPKPEEDVKPVKEPDIRPQKDTGCSVS) are disordered. Cysteine 408 carries the post-translational modification Cysteine methyl ester. Cysteine 408 carries S-farnesyl cysteine lipidation. Positions 409 to 411 (SVS) are cleaved as a propeptide — removed in mature form.

This sequence belongs to the BROX family. As to quaternary structure, monomer. Interacts with CHMP4B. Interacts with CHMP5: this interaction allows the recruitment of BROX to cellular membranes. Interacts with SYN2; this interaction promotes SYN2 ubiquitination and facilitates the relaxation of mechanical stress imposed by compressive actin fibers at the rupture site. Post-translationally, farnesylation is required for nuclear envelope localization.

The protein localises to the nucleus membrane. Nuclear envelope-associated factor that is involved in the nuclear envelope ruptures during interphase (NERDI) repair, where it is locally recruited by CHMP5 and reduces cytoskeletal stress through its action on SYN2 to help reseal the ruptured membrane. The protein is BRO1 domain-containing protein BROX of Mus musculus (Mouse).